The following is a 208-amino-acid chain: ATP synthase subunit b (208 aa).

Positions 1–27 (MVKAKKLVFKWSLLVFSFFTLSLFLVS) are cleaved as a signal peptide. Cys-28 is lipidated: N-palmitoyl cysteine. Residue Cys-28 is the site of S-diacylglycerol cysteine attachment. The helical transmembrane segment at 49–69 (WVFITHLLAFFILLTLMIFLF) threads the bilayer.

This sequence belongs to the ATPase B chain family. F-type ATPases have 2 components, F(1) - the catalytic core - and F(0) - the membrane proton channel. F(1) has five subunits: alpha(3), beta(3), gamma(1), delta(1), epsilon(1). F(0) has three main subunits: a(1), b(2) and c(10-14). The alpha and beta chains form an alternating ring which encloses part of the gamma chain. F(1) is attached to F(0) by a central stalk formed by the gamma and epsilon chains, while a peripheral stalk is formed by the delta and b chains.

The protein localises to the cell membrane. F(1)F(0) ATP synthase produces ATP from ADP in the presence of a proton or sodium gradient. F-type ATPases consist of two structural domains, F(1) containing the extramembraneous catalytic core and F(0) containing the membrane proton channel, linked together by a central stalk and a peripheral stalk. During catalysis, ATP synthesis in the catalytic domain of F(1) is coupled via a rotary mechanism of the central stalk subunits to proton translocation. Functionally, component of the F(0) channel, it forms part of the peripheral stalk, linking F(1) to F(0). The protein is ATP synthase subunit b of Mycoplasma genitalium (strain ATCC 33530 / DSM 19775 / NCTC 10195 / G37) (Mycoplasmoides genitalium).